Reading from the N-terminus, the 606-residue chain is Polypeptide N-acetylgalactosaminyltransferase 9 (606 aa).

Topologically, residues 1–6 are cytoplasmic; sequence MAVARK. Residues 7–29 traverse the membrane as a helical; Signal-anchor for type II membrane protein segment; the sequence is IRTLLTVNILVFVGIVLFSVYCR. At 30-606 the chain is on the lumenal side; the sequence is LQGRSQELVR…IRNWIKHARH (577 aa). Positions 43-62 are disordered; that stretch reads GGCRPRPATPAPGSPLRSGG. 2 disulfides stabilise this stretch: Cys-144–Cys-375 and Cys-366–Cys-445. Positions 153-264 are catalytic subdomain A; that stretch reads LPQVSVVFIF…TGWAEPALSR (112 aa). Substrate is bound by residues Asp-194 and Arg-225. Residues Asp-248, His-250, and His-380 each contribute to the Mn(2+) site. Residues 321-383 are catalytic subdomain B; the sequence is PIRTPAMIGC…PCSRVAHIER (63 aa). Substrate contacts are provided by Arg-383 and Tyr-388. Residue Asn-463 is glycosylated (N-linked (GlcNAc...) asparagine). Positions 467-603 constitute a Ricin B-type lectin domain; the sequence is TYGEVRNSKA…KWMIRNWIKH (137 aa). Cystine bridges form between Cys-480–Cys-496, Cys-528–Cys-543, and Cys-570–Cys-590.

This sequence belongs to the glycosyltransferase 2 family. GalNAc-T subfamily. The cofactor is Mn(2+).

The protein resides in the golgi apparatus membrane. The catalysed reaction is L-seryl-[protein] + UDP-N-acetyl-alpha-D-galactosamine = a 3-O-[N-acetyl-alpha-D-galactosaminyl]-L-seryl-[protein] + UDP + H(+). The enzyme catalyses L-threonyl-[protein] + UDP-N-acetyl-alpha-D-galactosamine = a 3-O-[N-acetyl-alpha-D-galactosaminyl]-L-threonyl-[protein] + UDP + H(+). It participates in protein modification; protein glycosylation. Catalyzes the initial reaction in O-linked oligosaccharide biosynthesis, the transfer of an N-acetyl-D-galactosamine residue to a serine or threonine residue on the protein receptor. Does not glycosylate apomucin or SDC3. This is Polypeptide N-acetylgalactosaminyltransferase 9 (GALNT9) from Macaca fascicularis (Crab-eating macaque).